Reading from the N-terminus, the 395-residue chain is Probable peptidoglycan glycosyltransferase FtsW (395 aa).

The Cytoplasmic segment spans residues Met-1–Arg-24. A helical transmembrane segment spans residues Leu-25–Ile-45. Topologically, residues Ser-46–Gln-62 are periplasmic. A helical transmembrane segment spans residues Ile-63–Thr-83. Over Trp-84–Arg-86 the chain is Cytoplasmic. A helical transmembrane segment spans residues Ala-87–Val-107. At Gly-108 to Arg-116 the chain is on the periplasmic side. Residues Trp-117 to Leu-137 form a helical membrane-spanning segment. Topologically, residues Tyr-138 to Thr-152 are cytoplasmic. The chain crosses the membrane as a helical span at residues Ser-153–Leu-173. Over Gln-174–Gly-178 the chain is Periplasmic. A helical transmembrane segment spans residues Thr-179–Trp-199. A topological domain (cytoplasmic) is located at residue Arg-200. A helical transmembrane segment spans residues Phe-201–Tyr-221. Residues Arg-222 to Asp-276 are Periplasmic-facing. A helical transmembrane segment spans residues Phe-277 to Leu-297. Over Phe-298–Arg-316 the chain is Cytoplasmic. A helical membrane pass occupies residues Leu-317–Ile-337. Residues Asn-338–Thr-352 lie on the Periplasmic side of the membrane. Residues Leu-353–Leu-373 traverse the membrane as a helical segment. At Leu-374–Ser-395 the chain is on the cytoplasmic side.

Belongs to the SEDS family. FtsW subfamily.

It localises to the cell inner membrane. It carries out the reaction [GlcNAc-(1-&gt;4)-Mur2Ac(oyl-L-Ala-gamma-D-Glu-L-Lys-D-Ala-D-Ala)](n)-di-trans,octa-cis-undecaprenyl diphosphate + beta-D-GlcNAc-(1-&gt;4)-Mur2Ac(oyl-L-Ala-gamma-D-Glu-L-Lys-D-Ala-D-Ala)-di-trans,octa-cis-undecaprenyl diphosphate = [GlcNAc-(1-&gt;4)-Mur2Ac(oyl-L-Ala-gamma-D-Glu-L-Lys-D-Ala-D-Ala)](n+1)-di-trans,octa-cis-undecaprenyl diphosphate + di-trans,octa-cis-undecaprenyl diphosphate + H(+). It functions in the pathway cell wall biogenesis; peptidoglycan biosynthesis. Functionally, peptidoglycan polymerase that is essential for cell division. The protein is Probable peptidoglycan glycosyltransferase FtsW of Halorhodospira halophila (strain DSM 244 / SL1) (Ectothiorhodospira halophila (strain DSM 244 / SL1)).